Reading from the N-terminus, the 122-residue chain is Large ribosomal subunit protein uL14 (122 aa).

This sequence belongs to the universal ribosomal protein uL14 family. Part of the 50S ribosomal subunit. Forms a cluster with proteins L3 and L19. In the 70S ribosome, L14 and L19 interact and together make contacts with the 16S rRNA in bridges B5 and B8.

Functionally, binds to 23S rRNA. Forms part of two intersubunit bridges in the 70S ribosome. The sequence is that of Large ribosomal subunit protein uL14 from Bifidobacterium animalis subsp. lactis (strain AD011).